A 90-amino-acid chain; its full sequence is Probable Fe(2+)-trafficking protein (90 aa).

It belongs to the Fe(2+)-trafficking protein family.

Functionally, could be a mediator in iron transactions between iron acquisition and iron-requiring processes, such as synthesis and/or repair of Fe-S clusters in biosynthetic enzymes. The polypeptide is Probable Fe(2+)-trafficking protein (Marinobacter nauticus (strain ATCC 700491 / DSM 11845 / VT8) (Marinobacter aquaeolei)).